Reading from the N-terminus, the 36-residue chain is Mating hormone A-factor 1 (36 aa).

A propeptide spanning residues 1–21 (MQPSTATAAPKEKTSSEKKDN) is cleaved from the precursor. C33 bears the Cysteine methyl ester mark. C33 carries the S-farnesyl cysteine lipid modification. The propeptide at 34–36 (VIA) is removed in mature form.

Its subcellular location is the cell membrane. In terms of biological role, the active factor is excreted into the culture medium by haploid cells of the A mating type and acts on cells of the opposite mating type (type alpha). It mediates the conjugation process between the two types by inhibiting the initiation of DNA synthesis in type alpha cells and synchronizing them with type A. The chain is Mating hormone A-factor 1 (MFA1) from Saccharomyces cerevisiae (strain ATCC 204508 / S288c) (Baker's yeast).